A 236-amino-acid chain; its full sequence is tRNA (guanine-N(1)-)-methyltransferase (236 aa).

Residues Gly110 and 129-134 (LGDFVL) each bind S-adenosyl-L-methionine.

The protein belongs to the RNA methyltransferase TrmD family. As to quaternary structure, homodimer.

The protein resides in the cytoplasm. The enzyme catalyses guanosine(37) in tRNA + S-adenosyl-L-methionine = N(1)-methylguanosine(37) in tRNA + S-adenosyl-L-homocysteine + H(+). Its function is as follows. Specifically methylates guanosine-37 in various tRNAs. The polypeptide is tRNA (guanine-N(1)-)-methyltransferase (Clostridium perfringens (strain SM101 / Type A)).